The chain runs to 278 residues: Elongation factor Ts (278 aa).

An involved in Mg(2+) ion dislocation from EF-Tu region spans residues 79-82 (TDFV).

Belongs to the EF-Ts family.

It localises to the cytoplasm. Its function is as follows. Associates with the EF-Tu.GDP complex and induces the exchange of GDP to GTP. It remains bound to the aminoacyl-tRNA.EF-Tu.GTP complex up to the GTP hydrolysis stage on the ribosome. The sequence is that of Elongation factor Ts from Borrelia hermsii (strain HS1 / DAH).